Consider the following 508-residue polypeptide: Aspartic proteinase yapsin-3 (508 aa).

The first 20 residues, 1–20 (MKLQLAAVATLAVLTSPAFG), serve as a signal peptide directing secretion. A propeptide spanning residues 21–47 (RVLPDGKYVKIPFTKKKNGDNGELSKR) is cleaved from the precursor. The 332-residue stretch at 63–394 (YSVELAIGTP…DLDNYEISLA (332 aa)) folds into the Peptidase A1 domain. Residue asparagine 75 is glycosylated (N-linked (GlcNAc...) asparagine). Aspartate 81 is a catalytic residue. Asparagine 120, asparagine 160, asparagine 163, and asparagine 275 each carry an N-linked (GlcNAc...) asparagine glycan. The active site involves aspartate 288. N-linked (GlcNAc...) asparagine glycans are attached at residues asparagine 309, asparagine 328, asparagine 367, asparagine 422, asparagine 445, and asparagine 462. Residues 448–468 (STATTTRSTTTKKTNSTTTAK) are compositionally biased toward low complexity. Residues 448 to 476 (STATTTRSTTTKKTNSTTTAKSTHKSKRA) are disordered. Asparagine 483 is lipidated: GPI-anchor amidated asparagine. Positions 484-508 (SASSIRSTLGLLLVPSLLILSVFFS) are cleaved as a propeptide — removed in mature form.

The protein belongs to the peptidase A1 family. Post-translationally, can also be processed to start at Phe-54.

Its subcellular location is the cell membrane. Cleaves proteins C-terminally to mono- and paired-basic residues. Required for cell wall integrity. The chain is Aspartic proteinase yapsin-3 (YPS3) from Saccharomyces cerevisiae (strain ATCC 204508 / S288c) (Baker's yeast).